A 299-amino-acid chain; its full sequence is Phosphate import ATP-binding protein PstB 1 (299 aa).

Residues 1-51 (MTENEMTSNDSTEPTPTTETAASSPDPSGDPLIEQSIDVEGTDSTAAETGK) are disordered. Residues 10–27 (DSTEPTPTTETAASSPDP) show a composition bias toward low complexity. One can recognise an ABC transporter domain in the interval 54-294 (IESSDLNVFY…PESQRVEDYI (241 aa)). 86 to 93 (GPSGCGKS) provides a ligand contact to ATP.

Belongs to the ABC transporter superfamily. Phosphate importer (TC 3.A.1.7) family. In terms of assembly, the complex is composed of two ATP-binding proteins (PstB), two transmembrane proteins (PstC and PstA) and a solute-binding protein (PstS).

It is found in the cell membrane. It carries out the reaction phosphate(out) + ATP + H2O = ADP + 2 phosphate(in) + H(+). Functionally, part of the ABC transporter complex PstSACB involved in phosphate import. Responsible for energy coupling to the transport system. The protein is Phosphate import ATP-binding protein PstB 1 of Haloarcula marismortui (strain ATCC 43049 / DSM 3752 / JCM 8966 / VKM B-1809) (Halobacterium marismortui).